The sequence spans 352 residues: Protein-glutamate methylesterase/protein-glutamine glutaminase 2 (352 aa).

The Response regulatory domain occupies 1–116 (MIVDDSAIVR…KDFIQDAASD (116 aa)). Position 50 is a 4-aspartylphosphate (Asp50). In terms of domain architecture, CheB-type methylesterase spans 159 to 351 (SKTTEHVVAI…QEIMRYAHLK (193 aa)). Active-site residues include Ser171, His197, and Asp293.

It belongs to the CheB family. Post-translationally, phosphorylated by CheA. Phosphorylation of the N-terminal regulatory domain activates the methylesterase activity.

It localises to the cytoplasm. The catalysed reaction is [protein]-L-glutamate 5-O-methyl ester + H2O = L-glutamyl-[protein] + methanol + H(+). It carries out the reaction L-glutaminyl-[protein] + H2O = L-glutamyl-[protein] + NH4(+). In terms of biological role, involved in chemotaxis. Part of a chemotaxis signal transduction system that modulates chemotaxis in response to various stimuli. Catalyzes the demethylation of specific methylglutamate residues introduced into the chemoreceptors (methyl-accepting chemotaxis proteins or MCP) by CheR. Also mediates the irreversible deamidation of specific glutamine residues to glutamic acid. In Shewanella denitrificans (strain OS217 / ATCC BAA-1090 / DSM 15013), this protein is Protein-glutamate methylesterase/protein-glutamine glutaminase 2.